A 353-amino-acid polypeptide reads, in one-letter code: C-X-C chemokine receptor type 4 (353 aa).

The interval 1–22 (MEELHIYPSDNYTEEDLGSGDY) is important for chemokine binding and signaling. The Extracellular portion of the chain corresponds to 1 to 39 (MEELHIYPSDNYTEEDLGSGDYDSMKEPCFREENAHFNR). Y7 is subject to Sulfotyrosine. An N-linked (GlcNAc...) asparagine glycan is attached at N11. Residue Y12 is modified to Sulfotyrosine. The O-linked (Xyl...) (chondroitin sulfate) serine glycan is linked to S19. Y22 is subject to Sulfotyrosine. Cystine bridges form between C29-C275 and C110-C187. A helical transmembrane segment spans residues 40–64 (IFLPTVYSIIFLTGIVGNGLVILVM). The Cytoplasmic segment spans residues 65–78 (GYQKKLRSMTDKYR). A helical transmembrane segment spans residues 79–100 (LHLSVADLLFVLTLPFWAVEAV). Positions 95-98 (WAVE) are chemokine binding. Residues 101–111 (ANWYFGNFLCK) lie on the Extracellular side of the membrane. Residues 112-131 (AVHVIYTVNLYSSVLILAFI) form a helical membrane-spanning segment. Positions 114-118 (HVIYT) are chemokine binding. The Cytoplasmic segment spans residues 132–155 (SLDRYLAIVHATNSQRPRKLLAEK). The Important for signaling signature appears at 134 to 136 (DRY). Residues 136 to 148 (YLAIVHATNSQRP) are involved in dimerization; when bound to chemokine. The chain crosses the membrane as a helical span at residues 156–175 (VVYVGVWIPALLLTIPDFIF). The Extracellular segment spans residues 176-196 (ANVREADDRYICDRFYPNDSW). The chemokine binding, important for signaling stretch occupies residues 187–191 (CDRFY). The tract at residues 192–211 (PNDSWLVVFQFQHIMVGLIL) is involved in dimerization. A helical transmembrane segment spans residues 197 to 217 (LVVFQFQHIMVGLILPGIVIL). Residues 218–242 (SCYCIIISKLSHSKGYQKRKALKTT) are Cytoplasmic-facing. A helical transmembrane segment spans residues 243 to 262 (VILILAFFACWLPYYIGISI). Residues 263–283 (DSFILLEIIKQGCEFEKTVHK) are Extracellular-facing. An involved in dimerization region spans residues 267 to 269 (LLE). The helical transmembrane segment at 284 to 303 (WISITEALAFFHCCLNPILY) threads the bilayer. The Cytoplasmic portion of the chain corresponds to 304-353 (AFLGAKFKTSAQHALTSVSRGSSLKILSKGKRGGHSSVSTESESSSFHSS). Residues S320 and S322 each carry the phosphoserine modification. A phosphoserine; by PKC and GRK6 mark is found at S325 and S326. The tract at residues 330–353 (LSKGKRGGHSSVSTESESSSFHSS) is disordered. A Phosphoserine; by GRK6 modification is found at S331. A Glycyl lysine isopeptide (Lys-Gly) (interchain with G-Cter in ubiquitin) cross-link involves residue K332. The segment covering 338–353 (HSSVSTESESSSFHSS) has biased composition (low complexity). S340 carries the phosphoserine; by GRK6 modification. A phosphoserine mark is found at S349 and S352.

The protein belongs to the G-protein coupled receptor 1 family. As to quaternary structure, monomer. Can form homodimers. Interacts with CD164. Interacts with ARRB2; the interaction is dependent on the C-terminal phosphorylation of CXCR4 and allows activation of MAPK1 and MAPK3. Interacts with ARR3; the interaction is dependent on the C-terminal phosphorylation of CXCR4 and modulates calcium mobilization. Interacts with RNF113A; the interaction, enhanced by CXCL12, promotes CXCR4 ubiquitination and subsequent degradation. Interacts (via the cytoplasmic C-terminal) with ITCH (via the WW domains I and II); the interaction, enhanced by CXCL12, promotes CXCR4 ubiquitination and leads to its degradation. Interacts with extracellular ubiquitin. Interacts with DBN1; this interaction is enhanced by antigenic stimulation. Following LPS binding, may form a complex with GDF5, HSP90AA1 and HSPA8. Post-translationally, phosphorylated on agonist stimulation. Rapidly phosphorylated on serine and threonine residues in the C-terminal. Phosphorylation at Ser-325 and Ser-326 leads to recruitment of ITCH, ubiquitination and protein degradation. In terms of processing, ubiquitinated after ligand binding, leading to its degradation. Ubiquitinated by ITCH at the cell membrane on agonist stimulation. The ubiquitin-dependent mechanism, endosomal sorting complex required for transport (ESCRT), then targets CXCR4 for lysosomal degradation. This process is dependent also on prior Ser-/Thr-phosphorylation in the C-terminal of CXCR4. Also binding of ARRB1 to STAM negatively regulates CXCR4 sorting to lysosomes though modulating ubiquitination of SFR5S. Sulfation is required for efficient binding of CXCL12/SDF-1alpha and promotes its dimerization. Post-translationally, O- and N-glycosylated. N-glycosylation can mask coreceptor function. The O-glycosylation chondroitin sulfate attachment does not affect interaction with CXCL12/SDF-1alpha nor its coreceptor activity.

The protein resides in the cell membrane. It is found in the cell junction. It localises to the early endosome. Its subcellular location is the late endosome. The protein localises to the lysosome. Receptor for the C-X-C chemokine CXCL12/SDF-1 that transduces a signal by increasing intracellular calcium ion levels and enhancing MAPK1/MAPK3 activation. Involved in the AKT signaling cascade. Plays a role in regulation of cell migration, e.g. during wound healing. Acts as a receptor for extracellular ubiquitin; leading to enhanced intracellular calcium ions and reduced cellular cAMP levels. Binds bacterial lipopolysaccharide (LPS) et mediates LPS-induced inflammatory response, including TNF secretion by monocytes. Involved in hematopoiesis and in cardiac ventricular septum formation. Also plays an essential role in vascularization of the gastrointestinal tract, probably by regulating vascular branching and/or remodeling processes in endothelial cells. Involved in cerebellar development. In the CNS, could mediate hippocampal-neuron survival. The chain is C-X-C chemokine receptor type 4 (CXCR4) from Canis lupus familiaris (Dog).